We begin with the raw amino-acid sequence, 24 residues long: Glutamate dehydrogenase (24 aa).

It belongs to the Glu/Leu/Phe/Val dehydrogenases family. Homohexamer.

The protein resides in the cytoplasm. The catalysed reaction is L-glutamate + NAD(+) + H2O = 2-oxoglutarate + NH4(+) + NADH + H(+). The enzyme catalyses L-glutamate + NADP(+) + H2O = 2-oxoglutarate + NH4(+) + NADPH + H(+). This chain is Glutamate dehydrogenase (gdhA), found in Pyrococcus woesei.